A 1537-amino-acid polypeptide reads, in one-letter code: Dual oxidase (1537 aa).

The segment at 1–29 (MSVPSAPHQRAESKNRVPRPGQKNRKLPK) is disordered. Residues 1 to 626 (MSVPSAPHQR…EGYDYFSGSE (626 aa)) lie on the Extracellular side of the membrane. The interval 63–628 (MYSQTEKQRY…YDYFSGSELM (566 aa)) is peroxidase-like; mediates peroxidase activity. 4 N-linked (GlcNAc...) asparagine glycosylation sites follow: asparagine 133, asparagine 233, asparagine 577, and asparagine 606. The chain crosses the membrane as a helical span at residues 627–647 (LMFIYVCVFLGFVPILCAGAG). The Cytoplasmic portion of the chain corresponds to 648-1029 (YCVVKLQNSK…ITFLEENRQN (382 aa)). At serine 826 the chain carries Phosphoserine. 3 consecutive EF-hand domains span residues 855 to 890 (PNDM…FSRG), 891 to 926 (KTDD…LVEI), and 936 to 971 (QVTE…YKGD). Ca(2+) contacts are provided by aspartate 868, aspartate 870, aspartate 872, arginine 874, glutamate 879, aspartate 904, aspartate 906, asparagine 908, and glutamate 915. Residues 1030-1050 (IFYLFLFYVVTIVLFVERFIH) form a helical membrane-spanning segment. Topologically, residues 1051–1065 (YSFMAEHTDLRHIMG) are extracellular. A helical membrane pass occupies residues 1066–1086 (VGIAITRGSAASLSFCYSLLL). One can recognise a Ferric oxidoreductase domain in the interval 1078–1218 (LSFCYSLLLL…TLYIGLYLLS (141 aa)). Residues 1087 to 1116 (LTMSRNLITKLKEFPIQQYIPLDSHIQFHK) are Cytoplasmic-facing. Tyrosine 1105 is subject to Phosphotyrosine. Residues 1117–1137 (IAACTALFFSVLHTVGHIVNF) form a helical membrane-spanning segment. At 1138–1171 (YHVSTQSHENLRCLTREVHFASDYKPDITFWLFQ) the chain is on the extracellular side. The helical transmembrane segment at 1172–1192 (TVTGTTGVMLFIIMCIIFVFA) threads the bilayer. Residues 1193–1202 (HPTIRKKAYN) are Cytoplasmic-facing. A helical membrane pass occupies residues 1203–1223 (FFWNMHTLYIGLYLLSLIHGL). Over 1224 to 1230 (ARLTGPP) the chain is Extracellular. Residues 1231–1251 (RFWMFFLGPGIVYTLDKIVSL) form a helical membrane-spanning segment. The Cytoplasmic portion of the chain corresponds to 1252-1537 (RTKYMALDVI…YFIHHFENFG (286 aa)). Residues 1253–1358 (TKYMALDVID…EGPFGGGNQD (106 aa)) form the FAD-binding FR-type domain.

In the N-terminal section; belongs to the peroxidase family.

The protein localises to the membrane. It catalyses the reaction NADH + O2 + H(+) = H2O2 + NAD(+). The catalysed reaction is NADPH + O2 + H(+) = H2O2 + NADP(+). Peroxidase activity is inhibited by aminotriazole and azide. Plays a role in innate immunity limiting microbial proliferation in the gut. Acts downstream of a hh-signaling pathway to induce the production of reactive oxygen species (ROS) in response to intestinal bacterial infection. May generate antimicrobial oxidative burst through its peroxidase-like domain. The protein is Dual oxidase (Duox) of Drosophila melanogaster (Fruit fly).